A 400-amino-acid chain; its full sequence is CinA-like protein (400 aa).

This sequence belongs to the CinA family.

In Sulfurihydrogenibium sp. (strain YO3AOP1), this protein is CinA-like protein.